The chain runs to 188 residues: Elongation factor P (188 aa).

Lysine 34 bears the N6-(3,6-diaminohexanoyl)-5-hydroxylysine mark.

The protein belongs to the elongation factor P family. In terms of processing, may be beta-lysylated on the epsilon-amino group of Lys-34 by the combined action of EpmA and EpmB, and then hydroxylated on the C5 position of the same residue by EpmC (if this protein is present). Lysylation is critical for the stimulatory effect of EF-P on peptide-bond formation. The lysylation moiety may extend toward the peptidyltransferase center and stabilize the terminal 3-CCA end of the tRNA. Hydroxylation of the C5 position on Lys-34 may allow additional potential stabilizing hydrogen-bond interactions with the P-tRNA.

The protein localises to the cytoplasm. It functions in the pathway protein biosynthesis; polypeptide chain elongation. Functionally, involved in peptide bond synthesis. Alleviates ribosome stalling that occurs when 3 or more consecutive Pro residues or the sequence PPG is present in a protein, possibly by augmenting the peptidyl transferase activity of the ribosome. Modification of Lys-34 is required for alleviation. The polypeptide is Elongation factor P (Pectobacterium atrosepticum (strain SCRI 1043 / ATCC BAA-672) (Erwinia carotovora subsp. atroseptica)).